The following is a 530-amino-acid chain: 26S proteasome non-ATPase regulatory subunit 3 (530 aa).

The span at 1–16 (MKQEGSARRRGADKAK) shows a compositional bias: basic and acidic residues. The disordered stretch occupies residues 1-65 (MKQEGSARRR…TEHSQRELDT (65 aa)). The segment covering 17 to 30 (PPPGGEQEPPPPAP) has biased composition (pro residues). Lys-36 participates in a covalent cross-link: Glycyl lysine isopeptide (Lys-Gly) (interchain with G-Cter in SUMO1); alternate. Lys-36 participates in a covalent cross-link: Glycyl lysine isopeptide (Lys-Gly) (interchain with G-Cter in SUMO2); alternate. The PCI domain occupies 282–461 (ARYLYYTGRI…GYVQSKEMID (180 aa)). 2 positions are modified to phosphoserine: Ser-414 and Ser-426. Residues 496–530 (SYNKDLESAEERREREQQDLEFAKEMAEDDDDSFP) are disordered. Basic and acidic residues predominate over residues 497–521 (YNKDLESAEERREREQQDLEFAKEM).

It belongs to the proteasome subunit S3 family. As to quaternary structure, component of the 19S proteasome regulatory particle complex. The 26S proteasome consists of a 20S core particle (CP) and two 19S regulatory subunits (RP). The regulatory particle is made of a lid composed of 9 subunits including PSMD3, a base containing 6 ATPases and few additional components. Interacts with UBQLN1 (via ubiquitin-like domain). Interacts with ERCC6.

Its function is as follows. Component of the 26S proteasome, a multiprotein complex involved in the ATP-dependent degradation of ubiquitinated proteins. This complex plays a key role in the maintenance of protein homeostasis by removing misfolded or damaged proteins, which could impair cellular functions, and by removing proteins whose functions are no longer required. Therefore, the proteasome participates in numerous cellular processes, including cell cycle progression, apoptosis, or DNA damage repair. The sequence is that of 26S proteasome non-ATPase regulatory subunit 3 (Psmd3) from Mus musculus (Mouse).